We begin with the raw amino-acid sequence, 587 residues long: Sedolisin (587 aa).

The signal sequence occupies residues 1–32 (MKSSAAKQTVLCLNRYAVVALPLAIASFAAFG). A propeptide spans 33–215 (ASPASTLWAP…VGERSAAKTL (183 aa)) (removed in mature form). In terms of domain architecture, Peptidase S53 spans 219–583 (TAKGHNPTEF…AKLSAYIRSN (365 aa)). Residues 276–295 (TIQTGSSNGDYSDDQQGQGE) form a disordered region. Active-site charge relay system residues include Glu-295 and Asp-299. An intrachain disulfide couples Cys-352 to Cys-391. Ser-502 serves as the catalytic Charge relay system. The Ca(2+) site is built by Asp-543, Val-544, Gly-559, Gly-561, and Asp-563. Positions 586–587 (GH) are cleaved as a propeptide — removed in mature form.

Ca(2+) is required as a cofactor. Autocatalytically processed.

Its subcellular location is the periplasm. It catalyses the reaction Hydrolysis of the B chain of insulin at 13-Glu-|-Ala-14, 15-Leu-|-Tyr-16 and 25-Phe-|-Tyr-26 and angiotensin I at 4-Tyr-|-Ile-5. A good synthetic substrate is Lys-Pro-Ile-Glu-Phe-|-Phe(NO2)-Arg-Leu.. Inhibited by 1,2-epoxy-3-(p-nitrophenoxy)propane (EPNP), but not by carboxyl proteinase inhibitors, such as pepstatin, pepstatin Ac (S-PI) and diazoacetyl-DL-norleucine methyl ester (DAN). Inhibited by tyrostatin, pseudo-tyrostatin, AcIPF, AcIAF, chymostatin and pseudo-iodotyrostatin. Its function is as follows. Pepstatin-insensitive serine-carboxyl proteinase. In vitro can hydrolyze various synthetic peptides. Also shows activity on acid-denatured hemoglobin and on casein. This is Sedolisin (pcp) from Pseudomonas sp. (strain 101) (Achromobacter parvulus T1).